We begin with the raw amino-acid sequence, 422 residues long: Serine--tRNA ligase (422 aa).

Residue 229–231 (TAE) participates in L-serine binding. 260-262 (RRE) provides a ligand contact to ATP. Residue glutamate 283 coordinates L-serine. Position 347 to 350 (347 to 350 (EISS)) interacts with ATP. Position 383 (serine 383) interacts with L-serine.

The protein belongs to the class-II aminoacyl-tRNA synthetase family. Type-1 seryl-tRNA synthetase subfamily. As to quaternary structure, homodimer. The tRNA molecule binds across the dimer.

The protein localises to the cytoplasm. The catalysed reaction is tRNA(Ser) + L-serine + ATP = L-seryl-tRNA(Ser) + AMP + diphosphate + H(+). The enzyme catalyses tRNA(Sec) + L-serine + ATP = L-seryl-tRNA(Sec) + AMP + diphosphate + H(+). It participates in aminoacyl-tRNA biosynthesis; selenocysteinyl-tRNA(Sec) biosynthesis; L-seryl-tRNA(Sec) from L-serine and tRNA(Sec): step 1/1. Catalyzes the attachment of serine to tRNA(Ser). Is also able to aminoacylate tRNA(Sec) with serine, to form the misacylated tRNA L-seryl-tRNA(Sec), which will be further converted into selenocysteinyl-tRNA(Sec). This Pelobacter propionicus (strain DSM 2379 / NBRC 103807 / OttBd1) protein is Serine--tRNA ligase.